Consider the following 323-residue polypeptide: Annexin A5 (323 aa).

Annexin repeat units lie at residues 17 to 88 (FNDK…ALMV), 89 to 160 (PAHL…SLVQ), 172 to 244 (GQVE…AVVK), and 248 to 319 (SIQG…LLCG).

The protein belongs to the annexin family.

Its function is as follows. Calcium/phospholipid-binding protein which promotes membrane fusion and is involved in exocytosis. The polypeptide is Annexin A5 (Cynops pyrrhogaster (Japanese fire-bellied newt)).